Consider the following 1167-residue polypeptide: DNA-directed RNA polymerase subunit beta (1167 aa).

It belongs to the RNA polymerase beta chain family. In terms of assembly, the RNAP catalytic core consists of 2 alpha, 1 beta, 1 beta' and 1 omega subunit. When a sigma factor is associated with the core the holoenzyme is formed, which can initiate transcription.

The enzyme catalyses RNA(n) + a ribonucleoside 5'-triphosphate = RNA(n+1) + diphosphate. DNA-dependent RNA polymerase catalyzes the transcription of DNA into RNA using the four ribonucleoside triphosphates as substrates. This Mycolicibacterium vanbaalenii (strain DSM 7251 / JCM 13017 / BCRC 16820 / KCTC 9966 / NRRL B-24157 / PYR-1) (Mycobacterium vanbaalenii) protein is DNA-directed RNA polymerase subunit beta.